A 635-amino-acid polypeptide reads, in one-letter code: Cerevisin (635 aa).

Positions 1 to 19 (MKLENTLFTLGALGSISAA) are cleaved as a signal peptide. Positions 20-280 (LVIPNLENAA…VERDSIVEAT (261 aa)) are excised as a propeptide. Basic and acidic residues-rich tracts occupy residues 35–50 (INKEDHHERPRKVEFT), 74–85 (KGQDKESPEFNG), 94–109 (SAHEGGKGMKPKHESS), and 126–136 (GCHENKVEEKK). Residues 35–155 (INKEDHHERP…KHHEKTLEKG (121 aa)) are disordered. The segment covering 137-155 (MKGKKVKGKKHHEKTLEKG) has biased composition (basic residues). Residues 182-278 (RYIIVFKRGA…DFVERDSIVE (97 aa)) form the Inhibitor I9 domain. Positions 289–614 (PWGLARISHR…KQELNMDEFI (326 aa)) constitute a Peptidase S8 domain. Residues aspartate 325 and histidine 357 each act as charge relay system in the active site. A disulfide bond links cysteine 460 and cysteine 491. Serine 519 (charge relay system) is an active-site residue. Residues 575–635 (DTPNVLIYNG…RDILDKLNII (61 aa)) constitute a propeptide that is removed on maturation. Asparagine 594 is a glycosylation site (N-linked (GlcNAc...) asparagine).

Belongs to the peptidase S8 family. Activated by N- and C-terminal proteolytic cleavage. Protease B (PrB/PRB1) processing requires at least 4 cleavages. First, the signal peptide is removed from the 76 kDa preproprotease B by signal peptidase in the ER. Then, PrB removes its own Pro-region (in trans) at the N-terminus, producing a 39 kDa form before exiting the ER. In the Golgi complex, the C-terminal Post-region of the 40 kDa proprotease B undergoes protease A (PrA/PEP4)-mediated processing to a 37 kDa intermediate, which in turn is quickly processed again by PrB in trans to yield the 31 kDa mature PrB. In terms of processing, glycosylated. Preproprotease B is a 76 kDa unglycosylated precursor that enters the endoplasmic reticulum (ER), where it receives one Asn-linked and an undetermined number of non-Asn-linked carbohydrate side chains. In the Golgi complex, the 39 kDa form becomes 40 kDa, due to elaboration of the Asn-linked side chain. The ultimate processing step removes a peptide containing the Asn-linked chain. Mature PrB has only non-Asn-linked carbohydrates.

The protein resides in the vacuole. It catalyses the reaction Hydrolysis of proteins with broad specificity, and of Bz-Arg-OEt &gt; Ac-Tyr-OEt. Does not hydrolyze peptide amides.. Vacuolar proteinase B involved in protein degradation in the vacuole. Among other substrates, acts on carboxypeptidase Y (cpY/PRC1) to activate it by processing its Pro-peptide. Required for meiosis and spore formation, and for optimal survival in stationary phase. This Saccharomyces cerevisiae (strain ATCC 204508 / S288c) (Baker's yeast) protein is Cerevisin (PRB1).